The following is a 389-amino-acid chain: Fructose-1,6-bisphosphate aldolase/phosphatase (389 aa).

The Proton acceptor; for FBP phosphatase activity role is filled by D17. Mg(2+) is bound by residues D17, H24, D57, and D58. Beta-D-fructose 1,6-bisphosphate is bound at residue H24. H24 is a binding site for dihydroxyacetone phosphate. Beta-D-fructose 1,6-bisphosphate is bound at residue Y95. Q99 contacts Mg(2+). 108-109 is a binding site for beta-D-fructose 1,6-bisphosphate; the sequence is GN. Residue D136 participates in Mg(2+) binding. K137 is a beta-D-fructose 1,6-bisphosphate binding site. K137 contributes to the dihydroxyacetone phosphate binding site. The active-site Proton donor/acceptor; for FBP aldolase activity is the Y233. K236, D237, and D238 together coordinate Mg(2+). Catalysis depends on K236, which acts as the Schiff-base intermediate with DHAP; for FBP aldolase activity. Residues 246 to 247, R270, D291, and Y352 each bind beta-D-fructose 1,6-bisphosphate; that span reads QS. Dihydroxyacetone phosphate-binding residues include R270 and D291.

It belongs to the FBP aldolase/phosphatase family. As to quaternary structure, homooctamer; dimer of tetramers. It depends on Mg(2+) as a cofactor.

It catalyses the reaction beta-D-fructose 1,6-bisphosphate + H2O = beta-D-fructose 6-phosphate + phosphate. It carries out the reaction beta-D-fructose 1,6-bisphosphate = D-glyceraldehyde 3-phosphate + dihydroxyacetone phosphate. Its pathway is carbohydrate biosynthesis; gluconeogenesis. In terms of biological role, catalyzes two subsequent steps in gluconeogenesis: the aldol condensation of dihydroxyacetone phosphate (DHAP) and glyceraldehyde-3-phosphate (GA3P) to fructose-1,6-bisphosphate (FBP), and the dephosphorylation of FBP to fructose-6-phosphate (F6P). The protein is Fructose-1,6-bisphosphate aldolase/phosphatase of Methanocaldococcus jannaschii (strain ATCC 43067 / DSM 2661 / JAL-1 / JCM 10045 / NBRC 100440) (Methanococcus jannaschii).